Here is a 263-residue protein sequence, read N- to C-terminus: MDISKIDLKADEKAVTKSIFKATYEMWMDNLEVDVVIVGGGPSGLTAGRYLADAGVKVLILERHLSFGGGTWGGGMGCPYITVQSPADEILSEVGIKLEEGEDGLFVADSVEVPAKLGTGAIDAGAKVLTGIVVEDVILKEGKVSGVVINSYAINKAGLHIDPLTINAKYVIDATGHDASVACTLARKNEDLGLVIPGEKSLWADEGENGLLKYTKELFPGLFVCGMASNATHGGYRMGAVFGGMYISGKIVADMILEKLKNE.

NAD(+) is bound by residues serine 43, 62 to 63, glycine 70, valine 134, and 160 to 162; these read ER and HID. The Fe cation site is built by aspartate 162 and histidine 177. The NAD(+) site is built by serine 180 and methionine 227. Residue arginine 237 participates in glycine binding.

Belongs to the THI4 family. Homooctamer; tetramer of dimers. The cofactor is Fe(2+).

It catalyses the reaction hydrogen sulfide + glycine + NAD(+) = ADP-5-ethyl-4-methylthiazole-2-carboxylate + nicotinamide + 3 H2O + H(+). It functions in the pathway cofactor biosynthesis; thiamine diphosphate biosynthesis. In terms of biological role, involved in the biosynthesis of the thiazole moiety of thiamine. Catalyzes the conversion of NAD and glycine to adenosine diphosphate 5-(2-hydroxyethyl)-4-methylthiazole-2-carboxylate (ADT), an adenylated thiazole intermediate, using free sulfide as a source of sulfur. This is Thiamine thiazole synthase from Methanococcus aeolicus (strain ATCC BAA-1280 / DSM 17508 / OCM 812 / Nankai-3).